The sequence spans 557 residues: Protein Red (557 aa).

Residues 1 to 84 form a disordered region; that stretch reads MPERDSEPFS…RKKKSYYAKL (84 aa). Positions 16-25 are enriched in basic and acidic residues; that stretch reads DGHDVDDPHS. Residues 42-53 are compositionally biased toward low complexity; the sequence is TPRAAPTSAPPS. Residues lysine 98 and lysine 137 each carry the N6-acetyllysine modification. Residue lysine 151 forms a Glycyl lysine isopeptide (Lys-Gly) (interchain with G-Cter in SUMO2) linkage. A disordered region spans residues 181-205; it reads KEKEEEELMEKPQKETKKDEDPENK. Position 287 is a phosphoserine (serine 287). Over residues 294–303 the composition is skewed to basic residues; that stretch reads RNKKLKKKDK. The interval 294-402 is disordered; sequence RNKKLKKKDK…PIDVDKGPGS (109 aa). Basic and acidic residues predominate over residues 304 to 313; the sequence is GKLEEKKPPE. Residues lysine 310 and lysine 331 each participate in a glycyl lysine isopeptide (Lys-Gly) (interchain with G-Cter in SUMO2) cross-link. The segment covering 332–398 has biased composition (basic and acidic residues); sequence TPRDKERERY…VDDEPIDVDK (67 aa). Repeat copies occupy residues 342–343, 344–345, 346–347, 348–349, 350–351, 352–353, 354–355, 356–357, 358–359, 360–361, 362–363, 364–365, 366–367, 368–369, 370–371, 372–373, and 374–375. The interval 342–375 is 17 X 2 AA tandem repeats of R-[ED]; sequence RERERDRERDRDRDRERERERDRERERERDRERE. Glycyl lysine isopeptide (Lys-Gly) (interchain with G-Cter in SUMO2) cross-links involve residues lysine 386, lysine 388, lysine 404, and lysine 408. Residues serine 417 and serine 460 each carry the phosphoserine modification. A Phosphothreonine modification is found at threonine 485. Glycyl lysine isopeptide (Lys-Gly) (interchain with G-Cter in SUMO2) cross-links involve residues lysine 496, lysine 501, and lysine 509. Serine 536 bears the Phosphoserine mark. Glycyl lysine isopeptide (Lys-Gly) (interchain with G-Cter in SUMO2) cross-links involve residues lysine 541, lysine 543, lysine 544, and lysine 553.

It belongs to the RED family. As to quaternary structure, component of the spliceosome B complex. Interacts with SMU1. Interacts with MAD1L1. May interact with DHX15.

Its subcellular location is the nucleus. It is found in the nucleoplasm. It localises to the chromosome. The protein resides in the cytoplasm. The protein localises to the cytoskeleton. Its subcellular location is the spindle pole. Involved in pre-mRNA splicing as a component of the spliceosome. Auxiliary spliceosomal protein that regulates selection of alternative splice sites in a small set of target pre-mRNA species. Required for normal mitotic cell cycle progression. Recruits MAD1L1 and MAD2L1 to kinetochores, and is required to trigger the spindle assembly checkpoint. Required for normal accumulation of SMU1. This Pongo abelii (Sumatran orangutan) protein is Protein Red (IK).